A 37-amino-acid polypeptide reads, in one-letter code: Potassium channel toxin alpha-KTx 3.13 (37 aa).

3 disulfides stabilise this stretch: cysteine 7–cysteine 27, cysteine 13–cysteine 32, and cysteine 17–cysteine 34. At lysine 37 the chain carries Lysine amide.

Belongs to the short scorpion toxin superfamily. Potassium channel inhibitor family. Alpha-KTx 03 subfamily. Expressed by the venom gland.

Its subcellular location is the secreted. Blocks voltage-gated potassium channels Kv1.1/KCNA1 (IC(50)=203.15 pM), Kv1.2/KCNA2 (IC(50)=8.92 nM) from rat and human Kv1.3 KCNA3/KCNA3 (IC(50)=171 pM) potently. At 2 uM, also blocks Shaker IR and has a moderate effect on rat Kv1.6/KCNA6. The protein is Potassium channel toxin alpha-KTx 3.13 of Mesobuthus eupeus (Lesser Asian scorpion).